Here is a 276-residue protein sequence, read N- to C-terminus: Rhomboid protease GlpG (276 aa).

The next 6 helical transmembrane spans lie at 94-114 (GPVTWVMMIACVVVFIAMQIL), 142-162 (ALMHFSLMHILFNLLWWWYLG), 169-189 (LGSGKLIVITLISALLSGYVQ), 192-212 (FSGPWFGGLSGVVYALMGYVW), 229-249 (LIIFALIWIVAGWFDLFGMSM), and 250-270 (ANGAHIAGLAVGLAMAFVDSL). Serine 201 serves as the catalytic Nucleophile. Residue histidine 254 is part of the active site.

The protein belongs to the peptidase S54 family.

The protein localises to the cell inner membrane. The enzyme catalyses Cleaves type-1 transmembrane domains using a catalytic dyad composed of serine and histidine that are contributed by different transmembrane domains.. Its function is as follows. Rhomboid-type serine protease that catalyzes intramembrane proteolysis. The sequence is that of Rhomboid protease GlpG from Shigella flexneri serotype 5b (strain 8401).